The sequence spans 897 residues: Molybdenum import ATP-binding protein ModC 2 (897 aa).

Residues 6-236 (RGRIDAAFRG…PALPLAYSRD (231 aa)) form the ABC transporter domain. 38–45 (GPSGCGKT) is a binding site for ATP. One can recognise a Mop domain in the interval 295 to 365 (ESSILNILPA…VKGVSLVRAS (71 aa)). Residues 823–848 (LGDRSVLGPREPDAGAKGRKRQNDPE) are disordered. Residues 832–848 (REPDAGAKGRKRQNDPE) are compositionally biased toward basic and acidic residues.

This sequence belongs to the ABC transporter superfamily. Molybdate importer (TC 3.A.1.8) family. The complex is composed of two ATP-binding proteins (ModC), two transmembrane proteins (ModB) and a solute-binding protein (ModA).

The protein resides in the cell inner membrane. It carries out the reaction molybdate(out) + ATP + H2O = molybdate(in) + ADP + phosphate + H(+). Its function is as follows. Part of the ABC transporter complex ModABC involved in molybdenum import. Responsible for energy coupling to the transport system. The sequence is that of Molybdenum import ATP-binding protein ModC 2 from Bradyrhizobium diazoefficiens (strain JCM 10833 / BCRC 13528 / IAM 13628 / NBRC 14792 / USDA 110).